Reading from the N-terminus, the 851-residue chain is Receptor like protein kinase S.2 (851 aa).

The Protein kinase 1 domain occupies 117 to 436 (FSDELILGSG…LPSFKSHPLY (320 aa)). ATP-binding positions include 123 to 131 (LGSGGFGRV) and K146. The active-site Proton acceptor is the D248. Positions 448–471 (SATTTTTRTTMTTTTSTTSFNASS) are disordered. The Protein kinase 2 domain occupies 532–819 (FSDARRVAEV…SILDGSERFF (288 aa)). Residues 538 to 546 (VAEVDFGTA) and K560 contribute to the ATP site.

This sequence belongs to the protein kinase superfamily. Ser/Thr protein kinase family.

The enzyme catalyses L-seryl-[protein] + ATP = O-phospho-L-seryl-[protein] + ADP + H(+). It carries out the reaction L-threonyl-[protein] + ATP = O-phospho-L-threonyl-[protein] + ADP + H(+). The chain is Receptor like protein kinase S.2 (LECRKS2) from Arabidopsis thaliana (Mouse-ear cress).